Here is a 202-residue protein sequence, read N- to C-terminus: Glycerol-3-phosphate acyltransferase 1 (202 aa).

Transmembrane regions (helical) follow at residues 8–28 (AGMIDLFMILGAYLLGGMSTG), 85–105 (LSLTTLILCLIAGVAGHIWPL), 122–142 (ILVVDPMLASAAAGVFLFVLA), 146–166 (QFTLSGLAAILGAPILSLIMA), and 173–190 (AGLAVLAIFILLAHRKNI).

Belongs to the PlsY family. Probably interacts with PlsX.

The protein resides in the cell membrane. The catalysed reaction is an acyl phosphate + sn-glycerol 3-phosphate = a 1-acyl-sn-glycero-3-phosphate + phosphate. It functions in the pathway lipid metabolism; phospholipid metabolism. In terms of biological role, catalyzes the transfer of an acyl group from acyl-phosphate (acyl-PO(4)) to glycerol-3-phosphate (G3P) to form lysophosphatidic acid (LPA). This enzyme utilizes acyl-phosphate as fatty acyl donor, but not acyl-CoA or acyl-ACP. This chain is Glycerol-3-phosphate acyltransferase 1, found in Desulfitobacterium hafniense (strain Y51).